Consider the following 377-residue polypeptide: 1-deoxy-D-xylulose 5-phosphate reductoisomerase (377 aa).

NADPH is bound by residues T20, G21, I23, N46, and N115. Position 116 (K116) interacts with 1-deoxy-D-xylulose 5-phosphate. An NADPH-binding site is contributed by E117. Residue D141 coordinates Mn(2+). 1-deoxy-D-xylulose 5-phosphate-binding residues include S142, E143, S166, and H189. Mn(2+) is bound at residue E143. G195 contacts NADPH. 1-deoxy-D-xylulose 5-phosphate is bound by residues S202, N207, K208, and E211. Position 211 (E211) interacts with Mn(2+).

It belongs to the DXR family. Mg(2+) is required as a cofactor. It depends on Mn(2+) as a cofactor.

It catalyses the reaction 2-C-methyl-D-erythritol 4-phosphate + NADP(+) = 1-deoxy-D-xylulose 5-phosphate + NADPH + H(+). Its pathway is isoprenoid biosynthesis; isopentenyl diphosphate biosynthesis via DXP pathway; isopentenyl diphosphate from 1-deoxy-D-xylulose 5-phosphate: step 1/6. Its function is as follows. Catalyzes the NADPH-dependent rearrangement and reduction of 1-deoxy-D-xylulose-5-phosphate (DXP) to 2-C-methyl-D-erythritol 4-phosphate (MEP). The polypeptide is 1-deoxy-D-xylulose 5-phosphate reductoisomerase (Malacoplasma penetrans (strain HF-2) (Mycoplasma penetrans)).